The sequence spans 556 residues: Genetic interactor of prohibitins 3, mitochondrial (556 aa).

Residues 1–21 constitute a mitochondrion transit peptide; the sequence is MLNLCHALRGVRQFSCSVIVK. The 193-residue stretch at 113–305 folds into the CP-type G domain; that stretch reads ESTLNDILNY…LFDLPGYSTS (193 aa).

The protein belongs to the TRAFAC class YlqF/YawG GTPase family. GEP3 subfamily.

It is found in the mitochondrion. Interacts genetically with prohibitins and thus may be involved in the mitochondrial lipid metabolism. This chain is Genetic interactor of prohibitins 3, mitochondrial (GEP3), found in Saccharomyces cerevisiae (strain ATCC 204508 / S288c) (Baker's yeast).